The sequence spans 526 residues: Organic cation/carnitine transporter 4 (526 aa).

Over 1-52 the chain is Cytoplasmic; it reads MESPEDRNGNDVRQPLLEKIPVKKEAEGEERLCIDEMLQRYCGEFGRWQLKH. A helical transmembrane segment spans residues 53–73; the sequence is FVLTCIAWALEAFHTMVMIFA. Topologically, residues 74–123 are extracellular; sequence DQEPEWRCVGSDCRVGSLNCELDPSSWEWTAGKGSSTVSEWGLICGDKYK. A helical transmembrane segment spans residues 124–144; it reads VGLVQALFFAGCMIGAGVFGH. The Cytoplasmic segment spans residues 145 to 153; that stretch reads LSDSKLGRK. A helical membrane pass occupies residues 154-174; it reads GSLTVVCIINAIFGIATAFSP. The Extracellular portion of the chain corresponds to 175–179; sequence NYWTY. A helical membrane pass occupies residues 180–200; the sequence is VVLRFLTGFSTGGVGLTAFVL. ATP is bound at residue 201–208; it reads ATEPIGPS. Topologically, residues 201-214 are cytoplasmic; it reads ATEPIGPSKRGVAG. Residues 215 to 235 traverse the membrane as a helical segment; the sequence is MSTFYFFSAGIAVLSGIAYVF. The Extracellular portion of the chain corresponds to 236 to 240; sequence RSWRE. The helical transmembrane segment at 241-261 threads the bilayer; the sequence is LFIVSSLPSLLFLLIVIPFIS. At 262 to 331 the chain is on the cytoplasmic side; that stretch reads ESPRWYLVRG…ILSPLMRMRL (70 aa). A helical transmembrane segment spans residues 332 to 352; that stretch reads VISVAISFTVSIVYYGLSLNV. Residues 353-360 lie on the Extracellular side of the membrane; it reads GNLKTNLY. A helical membrane pass occupies residues 361-381; the sequence is LNVFVNAVSEMPAFAITAVLL. The Cytoplasmic segment spans residues 382–390; that stretch reads DKYGRKPLS. The helical transmembrane segment at 391 to 411 threads the bilayer; it reads IGTQWFSCVFCLVGFSVWGAG. Residues 412 to 418 are Extracellular-facing; the sequence is PWKSVRM. A helical membrane pass occupies residues 419 to 439; it reads VSGVLGIFGMAGTYNLLFIYI. The Cytoplasmic portion of the chain corresponds to 440-451; it reads AELFPTVVRNAA. A helical transmembrane segment spans residues 452–472; sequence LGCATQAAQMGAILAPFVVVL. Residues 473-475 lie on the Extracellular side of the membrane; that stretch reads GEE. The helical transmembrane segment at 476–496 threads the bilayer; sequence LPFGVFAVCGLVGGGLAFYLP. The Cytoplasmic segment spans residues 497–526; that stretch reads ETLNKPLYDTMFGMHEAESESNRERGEVIC.

Belongs to the major facilitator (TC 2.A.1) superfamily. Organic cation transporter (TC 2.A.1.19) family. As to expression, mostly expressed in siliques, and, to a lower extent, in stems, leaves, flowers and siliques. Present in pollen. In the stems of secondary inflorescences present in the phloem cells and xylem parenchyma cells.

The protein localises to the vacuole membrane. Its function is as follows. High affinity carnitine transporter involved in the active cellular uptake of carnitine. Also transports organic cations. This chain is Organic cation/carnitine transporter 4 (OCT4), found in Arabidopsis thaliana (Mouse-ear cress).